The chain runs to 634 residues: DNA-directed RNA polymerase subunit gamma (634 aa).

Residues Cys74, Cys76, Cys89, and Cys92 each contribute to the Zn(2+) site. Residues Asp471, Asp473, and Asp475 each coordinate Mg(2+).

It belongs to the RNA polymerase beta' chain family. RpoC1 subfamily. In cyanobacteria the RNAP catalytic core is composed of 2 alpha, 1 beta, 1 beta', 1 gamma and 1 omega subunit. When a sigma factor is associated with the core the holoenzyme is formed, which can initiate transcription. It depends on Mg(2+) as a cofactor. Zn(2+) serves as cofactor.

It catalyses the reaction RNA(n) + a ribonucleoside 5'-triphosphate = RNA(n+1) + diphosphate. In terms of biological role, DNA-dependent RNA polymerase catalyzes the transcription of DNA into RNA using the four ribonucleoside triphosphates as substrates. The polypeptide is DNA-directed RNA polymerase subunit gamma (Synechococcus sp. (strain CC9902)).